Reading from the N-terminus, the 408-residue chain is Peptidase T (408 aa).

A Zn(2+)-binding site is contributed by His-78. Asp-80 is a catalytic residue. Zn(2+) is bound at residue Asp-140. Catalysis depends on Glu-173, which acts as the Proton acceptor. Zn(2+)-binding residues include Glu-174, Asp-196, and His-379.

This sequence belongs to the peptidase M20B family. Zn(2+) is required as a cofactor.

The protein localises to the cytoplasm. It carries out the reaction Release of the N-terminal residue from a tripeptide.. Its function is as follows. Cleaves the N-terminal amino acid of tripeptides. This is Peptidase T from Shigella boydii serotype 18 (strain CDC 3083-94 / BS512).